Consider the following 56-residue polypeptide: Protein hunchback (56 aa).

C2H2-type zinc fingers lie at residues 1 to 5 (HVRNH), 11 to 33 (HKCGKCNYSCVNKSMLNSHMKSH), and 39 to 56 (YRCADCTYATKYCHSLKL).

Belongs to the hunchback C2H2-type zinc-finger protein family.

Its subcellular location is the nucleus. Functionally, gap class segmentation protein that controls development of head structures. This is Protein hunchback (hb) from Bithynia tentaculata (Spire snail).